The primary structure comprises 554 residues: Zinc finger protein syd-9 (554 aa).

C2H2-type zinc fingers lie at residues 20-43, 65-87, and 93-116; these read LTCPQCPKSFSSTKLLQQHQQMFH, FICETCGKAFRFRSNLAEHRSVH, and YVCKFCGKSSRLKGNLTKHILKHH. 3 disordered regions span residues 136–158, 298–319, and 342–383; these read KIVTKDNGPTTNGSTPTTSTATP, SPDTVQSDHSDDFEQDSPPPMA, and ASGQ…CPSP. Residues 142–158 show a composition bias toward low complexity; the sequence is NGPTTNGSTPTTSTATP. 2 stretches are compositionally biased toward polar residues: residues 351 to 360 and 370 to 379; these read PDSTDTQKGC and SDPSTSSGDS. The segment at 387–410 adopts a C2H2-type 4 zinc-finger fold; it reads LHCKECGTLVRKSSHLPIHMTMSH. The tract at residues 516-554 is disordered; that stretch reads RMEMSLSPIKPFQQRFSRERSSSSSVERSPSRERSRSPL. The segment covering 544 to 554 has biased composition (basic and acidic residues); that stretch reads SPSRERSRSPL.

As to expression, expressed mainly in body wall muscles and ventral cord motoneurons.

Its subcellular location is the nucleus. It is found in the nucleus speckle. In terms of biological role, plays a role in regulating synaptic function, probably by modulation of endocytosis. May be dispensable in muscle for normal locomotion. May be involved in post-transcriptional mRNA processing, in parallel with unc-75. The protein is Zinc finger protein syd-9 of Caenorhabditis elegans.